The sequence spans 399 residues: Elongation factor Tu (399 aa).

The tr-type G domain occupies 10–209 (KPHVNIGTIG…EVDAYIPTPE (200 aa)). The G1 stretch occupies residues 19-26 (GHVDHGKT). 19 to 26 (GHVDHGKT) is a binding site for GTP. A Mg(2+)-binding site is contributed by T26. Residues 60–64 (GITIA) are G2. Positions 81 to 84 (DCPG) are G3. GTP contacts are provided by residues 81–85 (DCPGH) and 136–139 (NKQD). The segment at 136–139 (NKQD) is G4. A G5 region spans residues 174-176 (SAL).

Belongs to the TRAFAC class translation factor GTPase superfamily. Classic translation factor GTPase family. EF-Tu/EF-1A subfamily. Monomer.

Its subcellular location is the cytoplasm. It carries out the reaction GTP + H2O = GDP + phosphate + H(+). Functionally, GTP hydrolase that promotes the GTP-dependent binding of aminoacyl-tRNA to the A-site of ribosomes during protein biosynthesis. This is Elongation factor Tu from Helicobacter pylori (strain Shi470).